The following is an 865-amino-acid chain: DNA-directed RNA polymerase subunit Rpo1N (865 aa).

8 residues coordinate Zn(2+): cysteine 60, cysteine 63, cysteine 70, histidine 73, cysteine 100, cysteine 103, cysteine 146, and cysteine 149. Residues aspartate 451, aspartate 453, and aspartate 455 each coordinate Mg(2+). The interval 500-531 is disordered; that stretch reads EHTSSQGKRLFSVRSRPPDPQEGRAPPPDREG. A compositionally biased stretch (basic and acidic residues) spans 515 to 531; the sequence is RPPDPQEGRAPPPDREG.

The protein belongs to the RNA polymerase beta' chain family. As to quaternary structure, part of the RNA polymerase complex. The cofactor is Mg(2+). Requires Zn(2+) as cofactor.

It is found in the cytoplasm. The enzyme catalyses RNA(n) + a ribonucleoside 5'-triphosphate = RNA(n+1) + diphosphate. Its function is as follows. DNA-dependent RNA polymerase (RNAP) catalyzes the transcription of DNA into RNA using the four ribonucleoside triphosphates as substrates. Forms the clamp head domain. The chain is DNA-directed RNA polymerase subunit Rpo1N from Methanothermobacter thermautotrophicus (strain Winter) (Methanobacterium thermoautotrophicum).